A 145-amino-acid polypeptide reads, in one-letter code: Large ribosomal subunit protein uL13 (145 aa).

The protein belongs to the universal ribosomal protein uL13 family. In terms of assembly, part of the 50S ribosomal subunit.

Its function is as follows. This protein is one of the early assembly proteins of the 50S ribosomal subunit, although it is not seen to bind rRNA by itself. It is important during the early stages of 50S assembly. In Macrococcus caseolyticus (strain JCSC5402) (Macrococcoides caseolyticum), this protein is Large ribosomal subunit protein uL13.